The primary structure comprises 833 residues: MTFYNHKEIEPKWQDFWAKNHTFKTGTDSSKPKFYALDMFPYPSGAGLHVGHPEGYTATDILSRFKRAQGYNVLHPMGWDAFGLPAEQYAMDTGNDPADFTAENIANFKRQINSLGFSYDWDREVNTTDPNYYKWTQWIFTKLYEKGLAYEAEVPVNWVEELGTAIANEEVLPDGTSERGGYPVVRKPMRQWMLKITAYAERLLEDLEEVDWPESIKDMQRNWIGKSVGANITFNVKDSEESFTVFTTRPDTLFGATYAVLAPEHALVDAITTEEQAEAIAEYKRQASLKSDLARTDLAKEKTGVWTGAYAINPVNGKEMPIWIADYVLSSYGTGAIMAVPAHDERDWEFAKQFHLDIIPVLEGGNVQEAAYTEDGLHINSDFLDGLNKEEAIAKTVAWLEEKEVGNEKVSYRLRDWLFSRQRYWGEPIPIIHWEDGTSTAVPEDQLPLILPVTKDIHPSGTGESPLANITDWLEVTREDGVKGRRETNTMPQWAGSSWYYLRYIDPKNDKAIADPDLLKQWLPVDIYVGGAEHAVLHLLYARFWHKVLYDLGVVPTKEPFQKLFNQGMILGTSYRDHRGALVATDKVEKREGSYFHIETGEELEQAPAKMSKSLKNVVNPDDVVEQYGADTLRVYEMFMGPLDASIAWSEEGLEGSRKFLDRVYRLITTKEMTGDNSGALDKVYHETVKAVTEQIESMKFNTAIAQLMIFVNAANKEDKLYKEQAKGFVQLIAPFAPHLGEELWQVLTDSNQSISHVAWPTWDENKLVENDVEIVVQIKGKVKAKLVLAKDLSKEELEAAALSHEKIQAEIAGKEIVKVIAVPNKLVNIVVK.

Residues 41–52 carry the 'HIGH' region motif; the sequence is PYPSGAGLHVGH. The short motif at 610 to 614 is the 'KMSKS' region element; sequence KMSKS. ATP is bound at residue Lys-613.

The protein belongs to the class-I aminoacyl-tRNA synthetase family.

It is found in the cytoplasm. The catalysed reaction is tRNA(Leu) + L-leucine + ATP = L-leucyl-tRNA(Leu) + AMP + diphosphate. The protein is Leucine--tRNA ligase of Streptococcus uberis (strain ATCC BAA-854 / 0140J).